A 339-amino-acid chain; its full sequence is Glyceraldehyde-3-phosphate dehydrogenase (339 aa).

NAD(+)-binding positions include 12–13 (RI), aspartate 39, arginine 84, and serine 127. Residues 157-159 (SCT), threonine 188, arginine 203, 216-217 (TG), and arginine 239 contribute to the D-glyceraldehyde 3-phosphate site. The active-site Nucleophile is cysteine 158. Asparagine 320 provides a ligand contact to NAD(+).

The protein belongs to the glyceraldehyde-3-phosphate dehydrogenase family. Homotetramer.

The protein resides in the cytoplasm. It catalyses the reaction D-glyceraldehyde 3-phosphate + phosphate + NAD(+) = (2R)-3-phospho-glyceroyl phosphate + NADH + H(+). The protein operates within carbohydrate degradation; glycolysis; pyruvate from D-glyceraldehyde 3-phosphate: step 1/5. In terms of biological role, catalyzes the oxidative phosphorylation of glyceraldehyde 3-phosphate (G3P) to 1,3-bisphosphoglycerate (BPG) using the cofactor NAD. The first reaction step involves the formation of a hemiacetal intermediate between G3P and a cysteine residue, and this hemiacetal intermediate is then oxidized to a thioester, with concomitant reduction of NAD to NADH. The reduced NADH is then exchanged with the second NAD, and the thioester is attacked by a nucleophilic inorganic phosphate to produce BPG. The protein is Glyceraldehyde-3-phosphate dehydrogenase (gapA) of Mycobacterium leprae (strain TN).